Consider the following 217-residue polypeptide: ATP phosphoribosyltransferase (217 aa).

This sequence belongs to the ATP phosphoribosyltransferase family. Short subfamily. Heteromultimer composed of HisG and HisZ subunits.

It is found in the cytoplasm. The enzyme catalyses 1-(5-phospho-beta-D-ribosyl)-ATP + diphosphate = 5-phospho-alpha-D-ribose 1-diphosphate + ATP. It functions in the pathway amino-acid biosynthesis; L-histidine biosynthesis; L-histidine from 5-phospho-alpha-D-ribose 1-diphosphate: step 1/9. Its function is as follows. Catalyzes the condensation of ATP and 5-phosphoribose 1-diphosphate to form N'-(5'-phosphoribosyl)-ATP (PR-ATP). Has a crucial role in the pathway because the rate of histidine biosynthesis seems to be controlled primarily by regulation of HisG enzymatic activity. The protein is ATP phosphoribosyltransferase of Burkholderia orbicola (strain AU 1054).